The sequence spans 317 residues: Melanocyte-stimulating hormone receptor (317 aa).

Residues 1–37 are Extracellular-facing; that stretch reads MPVLGSQRRLLGSLNCTPPATFPLMLAPNRTGPQCLE. N-linked (GlcNAc...) asparagine glycosylation is present at Asn-29. Residues 38-63 traverse the membrane as a helical segment; it reads VSIPNGLFLSLGLVSLVENVLVVAAI. The Cytoplasmic portion of the chain corresponds to 64-72; the sequence is AKNSNLHSP. A helical membrane pass occupies residues 73–93; that stretch reads MYYFICCLAVSDLLVSVSNVL. Topologically, residues 94 to 118 are extracellular; it reads ETAVMLLLEAGALAARAAVVQQLDN. Residues 119–140 traverse the membrane as a helical segment; the sequence is VIDVLICGSMVSSLCFLGAIAV. Residues 141–163 lie on the Cytoplasmic side of the membrane; sequence DRYISIFYALRYHSVVTLPRAWR. The helical transmembrane segment at 164–183 threads the bilayer; sequence IIAAIWVASILTSLLFITYY. The Extracellular segment spans residues 184–191; that stretch reads NHTVVLLC. A helical membrane pass occupies residues 192 to 211; it reads LVGFFIAMLALMAVLYVHML. The Cytoplasmic portion of the chain corresponds to 212–240; it reads ARACQHARGIARLQKRQRPIHRGFGLKGA. Residues 241-266 form a helical membrane-spanning segment; the sequence is ATLTILLGVFFLCWGPFFLHLSLIVL. Residues 267–279 lie on the Extracellular side of the membrane; sequence CPQHPTCGCIFKN. Residues 280-300 form a helical membrane-spanning segment; sequence FNLFLALIICNAIVDPLIYAF. The Cytoplasmic portion of the chain corresponds to 301-317; that stretch reads RSQELRKTLQEVLQCSW. Cys-315 carries S-palmitoyl cysteine lipidation.

It belongs to the G-protein coupled receptor 1 family. Interacts with MGRN1, but does not undergo MGRN1-mediated ubiquitination; this interaction competes with GNAS-binding and thus inhibits agonist-induced cAMP production. Interacts with OPN3; the interaction results in a decrease in MC1R-mediated cAMP signaling and ultimately a decrease in melanin production in melanocytes.

Its subcellular location is the cell membrane. Functionally, receptor for MSH (alpha, beta and gamma) and ACTH. The activity of this receptor is mediated by G proteins which activate adenylate cyclase. Mediates melanogenesis, the production of eumelanin (black/brown) and phaeomelanin (red/yellow), via regulation of cAMP signaling in melanocytes. The sequence is that of Melanocyte-stimulating hormone receptor (MC1R) from Rangifer tarandus (Reindeer).